The chain runs to 45 residues: Large ribosomal subunit protein bL34 (45 aa).

The protein belongs to the bacterial ribosomal protein bL34 family.

This is Large ribosomal subunit protein bL34 (rpmH) from Streptomyces bikiniensis.